The primary structure comprises 136 residues: Nucleoside diphosphate kinase (136 aa).

Residues lysine 10, phenylalanine 58, arginine 86, threonine 92, arginine 104, and asparagine 114 each coordinate ATP. Catalysis depends on histidine 117, which acts as the Pros-phosphohistidine intermediate.

The protein belongs to the NDK family. Homotetramer. Mg(2+) is required as a cofactor.

Its subcellular location is the cytoplasm. It carries out the reaction a 2'-deoxyribonucleoside 5'-diphosphate + ATP = a 2'-deoxyribonucleoside 5'-triphosphate + ADP. The enzyme catalyses a ribonucleoside 5'-diphosphate + ATP = a ribonucleoside 5'-triphosphate + ADP. In terms of biological role, major role in the synthesis of nucleoside triphosphates other than ATP. The ATP gamma phosphate is transferred to the NDP beta phosphate via a ping-pong mechanism, using a phosphorylated active-site intermediate. This Mycobacterium sp. (strain MCS) protein is Nucleoside diphosphate kinase.